A 138-amino-acid chain; its full sequence is SPbeta prophage-derived uncharacterized protein YopJ (138 aa).

The polypeptide is SPbeta prophage-derived uncharacterized protein YopJ (yopJ) (Bacillus subtilis (strain 168)).